We begin with the raw amino-acid sequence, 1087 residues long: Period circadian protein (1087 aa).

Residues M1–V14 show a composition bias toward polar residues. Disordered stretches follow at residues M1–E98 and G123–Q153. Residues S15–S46 show a composition bias toward low complexity. The short motif at K65–K78 is the Nuclear localization signal element. Over residues K65–K78 the composition is skewed to basic residues. Residues S79–S93 show a composition bias toward low complexity. Basic and acidic residues predominate over residues D129–L140. The segment covering D141–Q150 has biased composition (acidic residues). 2 PAS domains span residues D220–I355 and F373–Q479. Disordered stretches follow at residues P613–P692, M736–D759, S871–A893, and T956–G1087. The span at N655–M664 shows a compositional bias: polar residues. The segment covering S665–N689 has biased composition (low complexity). Polar residues-rich tracts occupy residues Q877–E892 and L1003–K1024. Residues D1028 to S1047 are compositionally biased toward low complexity. The segment covering D1060 to G1087 has biased composition (basic and acidic residues).

As to quaternary structure, forms a heterodimer with timeless (TIM); the complex then translocates into the nucleus. In terms of processing, phosphorylated with a circadian rhythmicity, probably by the double-time protein (dbt). Phosphorylation could be implicated in the stability of per monomer and in the formation of heterodimer per-tim.

Its subcellular location is the nucleus. The protein localises to the cytoplasm. It is found in the perinuclear region. In terms of biological role, essential for biological clock functions. Determines the period length of circadian and ultradian rhythms; an increase in PER dosage leads to shortened circadian rhythms and a decrease leads to lengthened circadian rhythms. Essential for the circadian rhythmicity of locomotor activity, eclosion behavior, and for the rhythmic component of the male courtship song that originates in the thoracic nervous system. The biological cycle depends on the rhythmic formation and nuclear localization of the TIM-PER complex. Light induces the degradation of TIM, which promotes elimination of PER. Nuclear activity of the heterodimer coordinatively regulates PER and TIM transcription through a negative feedback loop. Behaves as a negative element in circadian transcriptional loop. Does not appear to bind DNA, suggesting indirect transcriptional inhibition. The chain is Period circadian protein (per) from Drosophila virilis (Fruit fly).